The following is a 924-amino-acid chain: Mediator of RNA polymerase II transcription subunit 16 (924 aa).

It belongs to the Mediator complex subunit 16 family. In terms of assembly, component of the Mediator complex.

It localises to the nucleus. Functionally, component of the Mediator complex, a coactivator involved in the regulated transcription of nearly all RNA polymerase II-dependent genes. Mediator functions as a bridge to convey information from gene-specific regulatory proteins to the basal RNA polymerase II transcription machinery. Mediator is recruited to promoters by direct interactions with regulatory proteins and serves as a scaffold for the assembly of a functional preinitiation complex with RNA polymerase II and the general transcription factors. In Yarrowia lipolytica (strain CLIB 122 / E 150) (Yeast), this protein is Mediator of RNA polymerase II transcription subunit 16 (SIN4).